Reading from the N-terminus, the 368-residue chain is High affinity iron permease 1 (368 aa).

7 consecutive transmembrane segments (helical) span residues 8–28, 50–70, 86–106, 142–162, 173–193, 204–224, and 287–307; these read VPIF…ISVL, VWIG…AFIA, IWEG…GLAM, AFFV…VVFI, SIPI…FLIY, FFVF…AKGV, and SIIS…FSYF. Residues 346-368 are disordered; the sequence is DKESDEEANNHPKEKIESDAIKA. Basic and acidic residues predominate over residues 353–368; the sequence is ANNHPKEKIESDAIKA.

The protein belongs to the oxidase-dependent Fe transporter (OFeT) (TC 9.A.10.1) family.

It is found in the cell membrane. High affinity iron permease required for iron uptake in iron-depleted environments. Required for full virulence in mice. The protein is High affinity iron permease 1 of Rhizopus delemar (strain RA 99-880 / ATCC MYA-4621 / FGSC 9543 / NRRL 43880) (Mucormycosis agent).